Here is a 708-residue protein sequence, read N- to C-terminus: Elongation factor G (708 aa).

The tr-type G domain maps to 8-290 (KRYRNIGISA…AVIQYLPAPM (283 aa)). Residues 17-24 (AHIDAGKT), 88-92 (DTPGH), and 142-145 (NKMD) contribute to the GTP site.

This sequence belongs to the TRAFAC class translation factor GTPase superfamily. Classic translation factor GTPase family. EF-G/EF-2 subfamily.

Its subcellular location is the cytoplasm. In terms of biological role, catalyzes the GTP-dependent ribosomal translocation step during translation elongation. During this step, the ribosome changes from the pre-translocational (PRE) to the post-translocational (POST) state as the newly formed A-site-bound peptidyl-tRNA and P-site-bound deacylated tRNA move to the P and E sites, respectively. Catalyzes the coordinated movement of the two tRNA molecules, the mRNA and conformational changes in the ribosome. This is Elongation factor G from Psychrobacter arcticus (strain DSM 17307 / VKM B-2377 / 273-4).